The sequence spans 373 residues: 8-amino-7-oxononanoate synthase (373 aa).

Position 16 (arginine 16) interacts with substrate. Pyridoxal 5'-phosphate is bound at residue 93–94 (GF). Histidine 118 is a binding site for substrate. Residues serine 165, 190–193 (DEAH), and 222–225 (TFSK) each bind pyridoxal 5'-phosphate. Lysine 225 carries the post-translational modification N6-(pyridoxal phosphate)lysine. Threonine 334 serves as a coordination point for substrate.

It belongs to the class-II pyridoxal-phosphate-dependent aminotransferase family. BioF subfamily. In terms of assembly, homodimer. Pyridoxal 5'-phosphate serves as cofactor.

It carries out the reaction 6-carboxyhexanoyl-[ACP] + L-alanine + H(+) = (8S)-8-amino-7-oxononanoate + holo-[ACP] + CO2. Its pathway is cofactor biosynthesis; biotin biosynthesis. Its function is as follows. Catalyzes the decarboxylative condensation of pimeloyl-[acyl-carrier protein] and L-alanine to produce 8-amino-7-oxononanoate (AON), [acyl-carrier protein], and carbon dioxide. This is 8-amino-7-oxononanoate synthase from Helicobacter pylori (strain J99 / ATCC 700824) (Campylobacter pylori J99).